The chain runs to 196 residues: UMP-CMP kinase (196 aa).

An ATP-binding site is contributed by 13–18; that stretch reads GAGKGT. Residues 33–63 are NMP; it reads SAGDLLRDERKKPDSQYGELIESYIRDGRIV. A ribonucleoside 5'-phosphate is bound by residues Arg-39, 61–63, and 93–96; these read RIV and GFPR. Asn-100 serves as a coordination point for CMP. The segment at 133-143 is LID; the sequence is ERGKSSGRSDD. Arg-134 contacts ATP. Positions 140 and 151 each coordinate a ribonucleoside 5'-phosphate. Lys-179 is an ATP binding site.

It belongs to the adenylate kinase family. UMP-CMP kinase subfamily. In terms of assembly, monomer. Mg(2+) serves as cofactor.

The protein localises to the cytoplasm. It is found in the nucleus. The enzyme catalyses CMP + ATP = CDP + ADP. It catalyses the reaction dCMP + ATP = dCDP + ADP. It carries out the reaction UMP + ATP = UDP + ADP. The catalysed reaction is a 2'-deoxyribonucleoside 5'-diphosphate + ATP = a 2'-deoxyribonucleoside 5'-triphosphate + ADP. The enzyme catalyses a ribonucleoside 5'-diphosphate + ATP = a ribonucleoside 5'-triphosphate + ADP. In terms of biological role, catalyzes the phosphorylation of pyrimidine nucleoside monophosphates at the expense of ATP. Plays an important role in de novo pyrimidine nucleotide biosynthesis. Has preference for UMP and CMP as phosphate acceptors. Also displays broad nucleoside diphosphate kinase activity. The chain is UMP-CMP kinase (cmpk1) from Xenopus tropicalis (Western clawed frog).